We begin with the raw amino-acid sequence, 247 residues long: Probable transcriptional regulatory protein Hhal_2210 (247 aa).

The protein belongs to the TACO1 family.

Its subcellular location is the cytoplasm. This Halorhodospira halophila (strain DSM 244 / SL1) (Ectothiorhodospira halophila (strain DSM 244 / SL1)) protein is Probable transcriptional regulatory protein Hhal_2210.